Consider the following 173-residue polypeptide: Crossover junction endodeoxyribonuclease RuvC (173 aa).

Residues aspartate 8, glutamate 67, and aspartate 139 contribute to the active site. Mg(2+) contacts are provided by aspartate 8, glutamate 67, and aspartate 139.

Belongs to the RuvC family. In terms of assembly, homodimer which binds Holliday junction (HJ) DNA. The HJ becomes 2-fold symmetrical on binding to RuvC with unstacked arms; it has a different conformation from HJ DNA in complex with RuvA. In the full resolvosome a probable DNA-RuvA(4)-RuvB(12)-RuvC(2) complex forms which resolves the HJ. Mg(2+) serves as cofactor.

Its subcellular location is the cytoplasm. The enzyme catalyses Endonucleolytic cleavage at a junction such as a reciprocal single-stranded crossover between two homologous DNA duplexes (Holliday junction).. In terms of biological role, the RuvA-RuvB-RuvC complex processes Holliday junction (HJ) DNA during genetic recombination and DNA repair. Endonuclease that resolves HJ intermediates. Cleaves cruciform DNA by making single-stranded nicks across the HJ at symmetrical positions within the homologous arms, yielding a 5'-phosphate and a 3'-hydroxyl group; requires a central core of homology in the junction. The consensus cleavage sequence is 5'-(A/T)TT(C/G)-3'. Cleavage occurs on the 3'-side of the TT dinucleotide at the point of strand exchange. HJ branch migration catalyzed by RuvA-RuvB allows RuvC to scan DNA until it finds its consensus sequence, where it cleaves and resolves the cruciform DNA. The chain is Crossover junction endodeoxyribonuclease RuvC from Shewanella baltica (strain OS223).